Here is a 710-residue protein sequence, read N- to C-terminus: Adenylosuccinate synthetase (710 aa).

2 disordered regions span residues 1 to 57 (MPVR…NHAK) and 82 to 112 (MDDE…SAQC). Positions 11-25 (NNSSSGVSNALSSSS) are enriched in low complexity. Over residues 32-43 (SPSSRENSTPLS) the composition is skewed to polar residues. GTP is bound by residues 180–186 (GDEGKGK) and 210–212 (GHT). The active-site Proton acceptor is Asp-181. Mg(2+) contacts are provided by Asp-181 and Gly-210. IMP is bound by residues 181–184 (DEGK), 208–211 (NAGH), Thr-295, Lys-309, Gln-421, Thr-437, and Lys-567. The Proton donor role is filled by His-211. Substrate is bound at residue 563–569 (AVTKKPR). Residues Arg-569 and 697–699 (GNG) each bind GTP.

This sequence belongs to the adenylosuccinate synthetase family. As to quaternary structure, homodimer. Mg(2+) is required as a cofactor.

It localises to the cytoplasm. It catalyses the reaction IMP + L-aspartate + GTP = N(6)-(1,2-dicarboxyethyl)-AMP + GDP + phosphate + 2 H(+). The protein operates within purine metabolism; AMP biosynthesis via de novo pathway; AMP from IMP: step 1/2. Its function is as follows. Plays an important role in the salvage pathway for purine nucleotide biosynthesis. Catalyzes the first committed step in the biosynthesis of AMP from IMP. The polypeptide is Adenylosuccinate synthetase (Leishmania braziliensis).